A 277-amino-acid chain; its full sequence is 4-hydroxy-3-methylbut-2-enyl diphosphate reductase (277 aa).

Cys12 contributes to the [4Fe-4S] cluster binding site. His36 and His70 together coordinate (2E)-4-hydroxy-3-methylbut-2-enyl diphosphate. Residues His36 and His70 each coordinate dimethylallyl diphosphate. 2 residues coordinate isopentenyl diphosphate: His36 and His70. Cys92 is a binding site for [4Fe-4S] cluster. His120 is a binding site for (2E)-4-hydroxy-3-methylbut-2-enyl diphosphate. His120 contributes to the dimethylallyl diphosphate binding site. His120 contacts isopentenyl diphosphate. The active-site Proton donor is Glu122. Thr160 lines the (2E)-4-hydroxy-3-methylbut-2-enyl diphosphate pocket. Cys188 lines the [4Fe-4S] cluster pocket. Ser216, Ser217, Asn218, and Ser260 together coordinate (2E)-4-hydroxy-3-methylbut-2-enyl diphosphate. Dimethylallyl diphosphate contacts are provided by Ser216, Ser217, Asn218, and Ser260. 4 residues coordinate isopentenyl diphosphate: Ser216, Ser217, Asn218, and Ser260.

Belongs to the IspH family. [4Fe-4S] cluster is required as a cofactor.

It catalyses the reaction isopentenyl diphosphate + 2 oxidized [2Fe-2S]-[ferredoxin] + H2O = (2E)-4-hydroxy-3-methylbut-2-enyl diphosphate + 2 reduced [2Fe-2S]-[ferredoxin] + 2 H(+). The enzyme catalyses dimethylallyl diphosphate + 2 oxidized [2Fe-2S]-[ferredoxin] + H2O = (2E)-4-hydroxy-3-methylbut-2-enyl diphosphate + 2 reduced [2Fe-2S]-[ferredoxin] + 2 H(+). The protein operates within isoprenoid biosynthesis; dimethylallyl diphosphate biosynthesis; dimethylallyl diphosphate from (2E)-4-hydroxy-3-methylbutenyl diphosphate: step 1/1. It participates in isoprenoid biosynthesis; isopentenyl diphosphate biosynthesis via DXP pathway; isopentenyl diphosphate from 1-deoxy-D-xylulose 5-phosphate: step 6/6. In terms of biological role, catalyzes the conversion of 1-hydroxy-2-methyl-2-(E)-butenyl 4-diphosphate (HMBPP) into a mixture of isopentenyl diphosphate (IPP) and dimethylallyl diphosphate (DMAPP). Acts in the terminal step of the DOXP/MEP pathway for isoprenoid precursor biosynthesis. This chain is 4-hydroxy-3-methylbut-2-enyl diphosphate reductase, found in Sulfurovum sp. (strain NBC37-1).